Here is a 283-residue protein sequence, read N- to C-terminus: uncharacterized protein (283 aa).

The next 4 membrane-spanning stretches (helical) occupy residues 11 to 31, 35 to 55, 56 to 76, and 93 to 113; these read LFAYFSGLIAALSLFIYYVSA, EGALILCITFGVIAAGIWFGP, IYALAVTLIVLFVLGTLMMFF, and LVVWGIALLLFSFISGRIHDI. The 122-residue stretch at 162–283 folds into the GGDEF domain; that stretch reads NSFVFLLLHM…LENEMMMNEL (122 aa).

It is found in the cell membrane. This is an uncharacterized protein from Bacillus subtilis (strain 168).